Consider the following 62-residue polypeptide: Ferredoxin-2 (62 aa).

4Fe-4S ferredoxin-type domains are found at residues 2–28 and 29–62; these read AHRI…SAGD and SIYV…IIKV. Positions 9, 12, 15, 19, 38, 41, 50, and 54 each coordinate [4Fe-4S] cluster.

[4Fe-4S] cluster serves as cofactor.

Its function is as follows. Ferredoxins are iron-sulfur proteins that transfer electrons in a wide variety of metabolic reactions. This Chlorobaculum tepidum (strain ATCC 49652 / DSM 12025 / NBRC 103806 / TLS) (Chlorobium tepidum) protein is Ferredoxin-2.